The primary structure comprises 33 residues: Ice-structuring protein GS-5 (33 aa).

Methionine 1 is modified (blocked amino end (Met)).

This sequence belongs to the type-I AFP family.

In terms of biological role, antifreeze proteins lower the blood freezing point. This chain is Ice-structuring protein GS-5, found in Myoxocephalus aenaeus (Grubby sculpin).